The following is a 747-amino-acid chain: Plakophilin-1 (747 aa).

Positions 1 to 234 (MNHSPLKTAL…SFGHSRASSK (234 aa)) are required for binding to single stranded DNA. The interval 1 to 286 (MNHSPLKTAL…ESAKQQVYQL (286 aa)) is required for interaction with EIF4A1. Ser4 is subject to Phosphoserine. The tract at residues 48-68 (TVKRQKSKSSQSSTLSHSNRG) is disordered. Phosphorylation in this region is required for cytoplasmic localization and protein stabilization regions lie at residues 54-69 (SKSSQSSTLSHSNRGS) and 116-191 (RFSS…STCS). Ser118 bears the Phosphoserine; by PKB/AKT2 mark. 3 positions are modified to phosphoserine: Ser119, Ser121, and Ser142. The required for WNT-mediated nuclear localization stretch occupies residues 160 to 269 (YCDPRGTLRK…KYQAIGAYYI (110 aa)). ARM repeat units lie at residues 243 to 274 (SGLTIPKAVQYLSSQDEKYQAIGAYYIQHTCF), 275 to 316 (QDES…NLVF), 317 to 359 (RSTT…NLSS), 360 to 415 (TDEL…KRLG), 416 to 463 (MREL…NCVA), 525 to 556 (NYDCPLPEEETNPKGSGWLYHSDAIRTYLNLM), 557 to 603 (GKSK…IARL), 604 to 649 (LQSG…SHTG), and 650 to 713 (NTSN…DMWS).

The protein belongs to the beta-catenin family. As to quaternary structure, part of a complex that contains DSG3, PKP1, YAP1 and YWHAG; the complex is required for localization of DSG3 and YAP1 to the cell membrane in keratinocytes. Interacts with DSP. Interacts (via N-terminus) with KRT5/CK5, KRT8/CK8 (via rod domain), KRT15/CK15 and KRT18/CK18 (via rod domain) as part of intermediate filaments. Interacts with VIM (via rod domain). Interacts with DSP. Interacts with DES. Interacts with FXR1; the interaction may facilitate the binding of PKP1 to PKP2, PKP3 and DSP mRNA. Interacts (via N-terminus) with EIF4A1; the interaction promotes EIF4A1 recruitment to the cap-dependent translation complex and EIF4A1 ATPase activity. Interacts with TJP1/ZO-1; the interaction facilitates TJP1/ZO-1 localization to the plasma membrane. Interacts (when phosphorylated) with YWHAG; the interaction results in translocation of PKP1 to the cytoplasm and loss of intercellular adhesion in keratinocytes. Post-translationally, phosphorylated by AKT2; required for interaction with YWHAG and subsequent localization away from desmosomes to the cytoplasm. Phosphorylation of Ser-118 by AKT2 promotes PKP1-driven cap-dependent mRNA translation and decreases intercellular adhesion, phosphorylation is promoted by insulin. Phosphorylation by RIPK4 at the N-terminus is required for its role in differentiation of keratinocytes and DSG1 localization at cell junctions. Expressed in stratified squamous, complex, glandular duct and bladder epithelia (at protein level). In terms of tissue distribution, widely expressed (at protein level).

The protein resides in the cell junction. Its subcellular location is the desmosome. It localises to the nucleus. It is found in the cytoplasm. The protein localises to the perinuclear region. The protein resides in the cell membrane. Its subcellular location is the stress granule. A component of desmosome cell-cell junctions which are required for positive regulation of cellular adhesion. Plays a role in desmosome protein expression regulation and localization to the desmosomal plaque, thereby maintaining cell sheet integrity and anchorage of desmosomes to intermediate filaments. Required for localization of DSG3 and YAP1 to the cell membrane in keratinocytes in response to mechanical strain, via the formation of an interaction complex composed of DSG3, YAP1, PKP1 and YWHAG. Positively regulates differentiation of keratinocytes, potentially via promoting localization of DSG1 at desmosome cell junctions. Required for calcium-independent development and maturation of desmosome plaques specifically at lateral cell-cell contacts in differentiating keratinocytes. Plays a role in the maintenance of DSG3 protein abundance, DSG3 clustering and localization of these clusters to the cell membrane in keratinocytes. May also promote keratinocyte proliferation and morphogenesis during postnatal development. Required for tight junction inside-out transepidermal barrier function of the skin. Promotes Wnt-mediated proliferation and differentiation of ameloblasts, via facilitating TJP1/ZO-1 localization to tight junctions. Binds single-stranded DNA (ssDNA), and may thereby play a role in sensing DNA damage and promoting cell survival. Positively regulates cap-dependent translation and as a result cell proliferation, via recruitment of EIF4A1 to the initiation complex and promotion of EIF4A1 ATPase activity. Regulates the mRNA stability and protein abundance of desmosome components PKP2, PKP3, DSC2 and DSP, potentially via its interaction with FXR1. The sequence is that of Plakophilin-1 (PKP1) from Homo sapiens (Human).